A 489-amino-acid chain; its full sequence is Cytochrome P450 monooxygenase AMT3 (489 aa).

A helical membrane pass occupies residues 292–312 (LFMVAGTETTITALSGLVFLL). Position 436 (Cys436) interacts with heme.

This sequence belongs to the cytochrome P450 family. Heme serves as cofactor.

It is found in the membrane. Its pathway is mycotoxin biosynthesis. In terms of biological role, cytochrome P450 monooxygenase; part of the gene clusters that mediate the biosynthesis of AM-toxins, host-selective toxins (HSTs) causing Alternaria blotch on apple, a worldwide distributed disease. AM-toxins are cyclic depsipeptides containing the 3 residues 2-hydroxy-isovaleric acid (2-HIV), dehydroalanine, L-alanine which are common for all 3 AM-toxins I to III. The fourth precursor is L-alpha-amino-methoxyphenyl-valeric acid (L-Amv) for AM-toxin I, L-alpha-amino-phenyl-valeric acid (L-Apv) for AM-toxin II, and L-alpha-amino-hydroxyphenyl-valeric acid (L-Ahv) for AM-toxin III. AM-toxins have two target sites for affecting susceptible apple cells; they cause invagination of the plasma membrane and electrolyte loss and chloroplast disorganization. The non-ribosomal peptide synthetase AMT1 contains 4 catalytic modules and is responsible for activation of each residue in AM-toxin. The aldo-keto reductase AMT2 catalyzes the conversion of 2-keto-isovaleric acid (2-KIV) to 2-hydroxy-isovaleric acid (2-HIV), one of the precursor residues incorporated by AMT1 during AM-toxin biosynthesis, by reduction of its ketone to an alcohol. The cytochrome P450 monooxygenase AMT3 and the thioesterase AMT4 are also important for AM-toxin production, but their exact function within the AM-toxin biosynthesis are not known yet. Up to 21 proteins (including AMT1 to AMT4) are predicted to be involved in AM-toxin biosynthesis since their expression ishighly up-regulated in AM-toxin-producing cultures. This chain is Cytochrome P450 monooxygenase AMT3, found in Alternaria alternata (Alternaria rot fungus).